The following is a 99-amino-acid chain: Aspartyl/glutamyl-tRNA(Asn/Gln) amidotransferase subunit C (99 aa).

This sequence belongs to the GatC family. In terms of assembly, heterotrimer of A, B and C subunits.

It carries out the reaction L-glutamyl-tRNA(Gln) + L-glutamine + ATP + H2O = L-glutaminyl-tRNA(Gln) + L-glutamate + ADP + phosphate + H(+). The enzyme catalyses L-aspartyl-tRNA(Asn) + L-glutamine + ATP + H2O = L-asparaginyl-tRNA(Asn) + L-glutamate + ADP + phosphate + 2 H(+). Its function is as follows. Allows the formation of correctly charged Asn-tRNA(Asn) or Gln-tRNA(Gln) through the transamidation of misacylated Asp-tRNA(Asn) or Glu-tRNA(Gln) in organisms which lack either or both of asparaginyl-tRNA or glutaminyl-tRNA synthetases. The reaction takes place in the presence of glutamine and ATP through an activated phospho-Asp-tRNA(Asn) or phospho-Glu-tRNA(Gln). This is Aspartyl/glutamyl-tRNA(Asn/Gln) amidotransferase subunit C from Orientia tsutsugamushi (strain Ikeda) (Rickettsia tsutsugamushi).